The primary structure comprises 101 residues: Guanyl-specific ribonuclease St (101 aa).

A disulfide bridge connects residues C4 and C54. The Proton acceptor role is filled by E61. H91 acts as the Proton donor in catalysis.

This sequence belongs to the ribonuclease N1/T1 family.

It carries out the reaction [RNA] containing guanosine + H2O = an [RNA fragment]-3'-guanosine-3'-phosphate + a 5'-hydroxy-ribonucleotide-3'-[RNA fragment].. The sequence is that of Guanyl-specific ribonuclease St from Saccharopolyspora erythraea (Streptomyces erythraeus).